The primary structure comprises 287 residues: BURP domain-containing protein 2 (287 aa).

A signal peptide spans 1–21 (MARSLAALLLLLVAAAGASHA). The BURP domain occupies 67–287 (FFLEKDLFPG…PQDDMLWVRN (221 aa)).

In terms of tissue distribution, expressed in shoot.

This Oryza sativa subsp. japonica (Rice) protein is BURP domain-containing protein 2 (BURP2).